We begin with the raw amino-acid sequence, 184 residues long: TATA-box-binding protein (184 aa).

2 tandem repeats follow at residues 9–85 (IENI…IDKL) and 100–178 (VQNI…KKDL).

It belongs to the TBP family.

Its function is as follows. General factor that plays a role in the activation of archaeal genes transcribed by RNA polymerase. Binds specifically to the TATA box promoter element which lies close to the position of transcription initiation. The polypeptide is TATA-box-binding protein (Picrophilus torridus (strain ATCC 700027 / DSM 9790 / JCM 10055 / NBRC 100828 / KAW 2/3)).